A 275-amino-acid chain; its full sequence is Formamidopyrimidine-DNA glycosylase (275 aa).

The active-site Schiff-base intermediate with DNA is proline 2. Catalysis depends on glutamate 3, which acts as the Proton donor. The active-site Proton donor; for beta-elimination activity is lysine 58. DNA contacts are provided by histidine 93, arginine 111, and arginine 156. The segment at phenylalanine 241 to arginine 275 adopts an FPG-type zinc-finger fold. Arginine 265 acts as the Proton donor; for delta-elimination activity in catalysis.

The protein belongs to the FPG family. Monomer. Requires Zn(2+) as cofactor.

The enzyme catalyses Hydrolysis of DNA containing ring-opened 7-methylguanine residues, releasing 2,6-diamino-4-hydroxy-5-(N-methyl)formamidopyrimidine.. It catalyses the reaction 2'-deoxyribonucleotide-(2'-deoxyribose 5'-phosphate)-2'-deoxyribonucleotide-DNA = a 3'-end 2'-deoxyribonucleotide-(2,3-dehydro-2,3-deoxyribose 5'-phosphate)-DNA + a 5'-end 5'-phospho-2'-deoxyribonucleoside-DNA + H(+). Involved in base excision repair of DNA damaged by oxidation or by mutagenic agents. Acts as a DNA glycosylase that recognizes and removes damaged bases. Has a preference for oxidized purines, such as 7,8-dihydro-8-oxoguanine (8-oxoG). Has AP (apurinic/apyrimidinic) lyase activity and introduces nicks in the DNA strand. Cleaves the DNA backbone by beta-delta elimination to generate a single-strand break at the site of the removed base with both 3'- and 5'-phosphates. This is Formamidopyrimidine-DNA glycosylase from Burkholderia lata (strain ATCC 17760 / DSM 23089 / LMG 22485 / NCIMB 9086 / R18194 / 383).